The sequence spans 416 residues: Enterobactin exporter EntS (416 aa).

Residues 1 to 21 (MNKQSWLLNLSLLKTHPAFRA) lie on the Cytoplasmic side of the membrane. A helical membrane pass occupies residues 22-42 (VFLARFISIVSLGLLGVAVPV). Residues 43–55 (QIQMMTHSTWQVG) are Periplasmic-facing. A helical transmembrane segment spans residues 56-76 (LSVTLTGGAMFVGLMVGGVLA). The Cytoplasmic segment spans residues 77 to 83 (DRYERKK). The helical transmembrane segment at 84-104 (VILLARGTCGIGFIGLCLNAL) threads the bilayer. The Periplasmic portion of the chain corresponds to 105-109 (LPEPS). A helical membrane pass occupies residues 110–130 (LLAIYLLGLWDGFFASLGVTA). Residues 131 to 156 (LLAATPALVGRENLMQAGALTMLTVR) are Cytoplasmic-facing. The chain crosses the membrane as a helical span at residues 157-177 (LGSVISPMIGGLLLATGGVAW). Residue N178 is a topological domain, periplasmic. Residues 179 to 199 (YGLAAAGTFITLLPLLSLPAL) traverse the membrane as a helical segment. Topologically, residues 200 to 218 (PPPPQPREHPLKSLLAGFR) are cytoplasmic. A helical membrane pass occupies residues 219-239 (FLLASPLVGGIALLGGLLTMA). Topologically, residues 240–256 (SAVRVLYPALADNWQMS) are periplasmic. The helical transmembrane segment at 257 to 277 (AAEIGFLYAAIPLGAAIGALT) threads the bilayer. Topologically, residues 278–287 (SGKLAHSARP) are cytoplasmic. The chain crosses the membrane as a helical span at residues 288-307 (GLLMLLSTLGSFLAIGLFGL). Over 308–313 (MPMWIL) the chain is Periplasmic. Residues 314-336 (GVVCLALFGWLSAVSSLLQYTML) form a helical membrane-spanning segment. The Cytoplasmic portion of the chain corresponds to 337–356 (QTQTPEAMLGRINGLWTAQN). A helical membrane pass occupies residues 357–377 (VTGDAIGAALLGGLGAMMTPV). Position 378 (A378) is a topological domain, periplasmic. The chain crosses the membrane as a helical span at residues 379-399 (SASASGFGLLIIGVLLLLVLV). At 400–416 (ELRRFRQTPPQVTASDS) the chain is on the cytoplasmic side.

This sequence belongs to the major facilitator superfamily. EntS (TC 2.A.1.38) family.

The protein localises to the cell inner membrane. Component of an export pathway for enterobactin. The sequence is that of Enterobactin exporter EntS from Shigella boydii serotype 18 (strain CDC 3083-94 / BS512).